Here is a 169-residue protein sequence, read N- to C-terminus: MSVLQVLHFPDERLRITAQPVKEVNADIQRIVDDMFDTMYEEEGIGLAATQVDIHQRIIVIDVSEERDQRLVLINPELIEKSGDTGIEEGCLSIPETRALVPRAEHVKVRALDREGKAFELEASELLAICIQHEMDHLVGKLFIDYLSPLKRQRIRQKLEKLAKQNSRT.

The Fe cation site is built by C91 and H133. Residue E134 is part of the active site. H137 lines the Fe cation pocket.

The protein belongs to the polypeptide deformylase family. It depends on Fe(2+) as a cofactor.

It carries out the reaction N-terminal N-formyl-L-methionyl-[peptide] + H2O = N-terminal L-methionyl-[peptide] + formate. Its function is as follows. Removes the formyl group from the N-terminal Met of newly synthesized proteins. Requires at least a dipeptide for an efficient rate of reaction. N-terminal L-methionine is a prerequisite for activity but the enzyme has broad specificity at other positions. This Pectobacterium atrosepticum (strain SCRI 1043 / ATCC BAA-672) (Erwinia carotovora subsp. atroseptica) protein is Peptide deformylase.